A 428-amino-acid polypeptide reads, in one-letter code: Cholecystokinin receptor type A (428 aa).

Residues 1–41 (MEVADSLLGNGSDVPPPCELGLENETLVCLEQPRAAKEWQP) are Extracellular-facing. N-linked (GlcNAc...) asparagine glycans are attached at residues Asn-10 and Asn-24. A disulfide bridge connects residues Cys-18 and Cys-29. The chain crosses the membrane as a helical span at residues 42 to 67 (AVQILLYSLIFLLSVLGNTLVITVLI). At 68–77 (RNKRMRTVTN) the chain is on the cytoplasmic side. Residues 78 to 104 (IFLLSLAVSDLMLCLFCMPFNLIPNLL) traverse the membrane as a helical segment. Residues 105-115 (KDFIFGSAVCK) lie on the Extracellular side of the membrane. Cysteines 114 and 196 form a disulfide. The helical transmembrane segment at 116-137 (TTTYFMGTSVSVSTFNLVAISL) threads the bilayer. At 138 to 157 (ERYGAICKPLQSRVWQTKSH) the chain is on the cytoplasmic side. Residues 158–178 (ALKVIATTWCLSFTIMTPYPI) form a helical membrane-spanning segment. Topologically, residues 179–210 (YSNLVPFTKTNNQTANMCRFLLPNDVMQQSWH) are extracellular. Asn-190 carries an N-linked (GlcNAc...) asparagine glycan. The chain crosses the membrane as a helical span at residues 211–234 (TFLLLILFLIPGIVMMVAYGLISL). Topologically, residues 235–313 (ELYQGIKFDA…NLMAKKRVIR (79 aa)) are cytoplasmic. The tract at residues 250–269 (ARDRNPSTGSSGRYEDGDGC) is disordered. The helical transmembrane segment at 314–334 (MLMVIVVLFFLCWMPIFSANA) threads the bilayer. At 335–349 (WRAYDTASAERRLSG) the chain is on the extracellular side. Residues 350–373 (TPISFILLLSYTSSCVNPIIYCFM) traverse the membrane as a helical segment. The Cytoplasmic segment spans residues 374 to 428 (NKRFRLGFLATFPCCPHPGPPGPRGEVGEEEEGRTTGASLSRYSYSHMSASAPGP). A lipid anchor (S-palmitoyl cysteine) is attached at Cys-387. The segment at 393–428 (PPGPRGEVGEEEEGRTTGASLSRYSYSHMSASAPGP) is disordered. A compositionally biased stretch (polar residues) spans 409–422 (TGASLSRYSYSHMS).

Belongs to the G-protein coupled receptor 1 family.

The protein resides in the cell membrane. In terms of biological role, receptor for cholecystokinin. Mediates pancreatic growth and enzyme secretion, smooth muscle contraction of the gall bladder and stomach. Has a 1000-fold higher affinity for CCK rather than for gastrin. It modulates feeding and dopamine-induced behavior in the central and peripheral nervous system. This receptor mediates its action by association with G proteins that activate a phosphatidylinositol-calcium second messenger system. The sequence is that of Cholecystokinin receptor type A (CCKAR) from Canis lupus familiaris (Dog).